The primary structure comprises 428 residues: Enolase (428 aa).

Q163 is a binding site for (2R)-2-phosphoglycerate. Residue E205 is the Proton donor of the active site. Mg(2+) contacts are provided by D242, E286, and D313. (2R)-2-phosphoglycerate-binding residues include K338, R367, S368, and K389. K338 serves as the catalytic Proton acceptor.

This sequence belongs to the enolase family. Requires Mg(2+) as cofactor.

It is found in the cytoplasm. Its subcellular location is the secreted. The protein localises to the cell surface. It catalyses the reaction (2R)-2-phosphoglycerate = phosphoenolpyruvate + H2O. It participates in carbohydrate degradation; glycolysis; pyruvate from D-glyceraldehyde 3-phosphate: step 4/5. Its function is as follows. Catalyzes the reversible conversion of 2-phosphoglycerate (2-PG) into phosphoenolpyruvate (PEP). It is essential for the degradation of carbohydrates via glycolysis. The sequence is that of Enolase from Geobacter sulfurreducens (strain ATCC 51573 / DSM 12127 / PCA).